We begin with the raw amino-acid sequence, 444 residues long: Transcriptional regulatory protein GlrR (444 aa).

The Response regulatory domain maps to 7 to 121; that stretch reads HLLLVDDDPG…ALYQAIDDAL (115 aa). The residue at position 56 (D56) is a 4-aspartylphosphate. One can recognise a Sigma-54 factor interaction domain in the interval 136 to 366; the sequence is IVTRSPLMLR…VNVIEQCVAL (231 aa). ATP contacts are provided by residues 164–171 and 227–236; these read GQSGTGKE and AEGGTLFLDE. Residues 414 to 433 constitute a DNA-binding region (H-T-H motif); that stretch reads VTHAARMAGRNRTEFYKLLS.

Phosphorylated by GlrK.

The protein resides in the cytoplasm. In terms of biological role, member of the two-component regulatory system GlrR/GlrK that up-regulates transcription of the glmY sRNA when cells enter the stationary growth phase. Regulates glmY transcription by binding to three conserved sites in the purL-glmY intergenic region. In Escherichia coli (strain K12), this protein is Transcriptional regulatory protein GlrR (glrR).